A 440-amino-acid polypeptide reads, in one-letter code: Protein translocase subunit SecY (440 aa).

10 consecutive transmembrane segments (helical) span residues 17 to 37 (IFFTIAMIVLYRIGAQIPSPG), 74 to 94 (IFAIGIMPYITASIIVQLLTV), 116 to 135 (YTRYLTVALALLQSSGIVAL), 155 to 175 (FFDLIVLVITMTAGAVLVMWM), 178 to 198 (LITEKGVGNGMSLLIFAGIAT), 213 to 233 (GVVFAVVLASVLILVIGVVFV), 270 to 290 (VIPVIFASSLIYMPVLITQIV), 316 to 336 (WQYIVLYFALTIFFSYFYVSV), 374 to 394 (LLFVGSLYLAVIAVLPNIMLD), and 403 to 423 (GATPFGGTAILILVSVALTTV).

This sequence belongs to the SecY/SEC61-alpha family. Component of the Sec protein translocase complex. Heterotrimer consisting of SecY, SecE and SecG subunits. The heterotrimers can form oligomers, although 1 heterotrimer is thought to be able to translocate proteins. Interacts with the ribosome. Interacts with SecDF, and other proteins may be involved. Interacts with SecA.

The protein resides in the cell membrane. Its function is as follows. The central subunit of the protein translocation channel SecYEG. Consists of two halves formed by TMs 1-5 and 6-10. These two domains form a lateral gate at the front which open onto the bilayer between TMs 2 and 7, and are clamped together by SecE at the back. The channel is closed by both a pore ring composed of hydrophobic SecY resides and a short helix (helix 2A) on the extracellular side of the membrane which forms a plug. The plug probably moves laterally to allow the channel to open. The ring and the pore may move independently. In Corynebacterium glutamicum (strain ATCC 13032 / DSM 20300 / JCM 1318 / BCRC 11384 / CCUG 27702 / LMG 3730 / NBRC 12168 / NCIMB 10025 / NRRL B-2784 / 534), this protein is Protein translocase subunit SecY.